A 363-amino-acid chain; its full sequence is Protein LEG1 homolog (363 aa).

An N-terminal signal peptide occupies residues 1–19 (MQCVWTLSLLQLVALWANA). Asparagine 79, asparagine 261, and asparagine 292 each carry an N-linked (GlcNAc...) asparagine glycan.

Belongs to the LEG1 family.

The protein localises to the secreted. Its function is as follows. May be involved in early liver development. The chain is Protein LEG1 homolog from Oncorhynchus mykiss (Rainbow trout).